Reading from the N-terminus, the 560-residue chain is Transcription termination factor 5, mitochondrial (560 aa).

A mitochondrion-targeting transit peptide spans methionine 1 to methionine 23. A disordered region spans residues methionine 23 to glutamate 47.

It belongs to the mTERF family. Probably binds to the mTTF-DNA complex.

The protein resides in the mitochondrion. In terms of biological role, binds promoter DNA and regulates initiation of transcription. Regulates mitochondrial replication and transcription. Required for normal topology and maintenance of mitochondrial DNA (mtDNA) levels. Regulates mtDNA replication by re-activating replication after replication pausing. Likely to regulate replication pausing by coordinating with the mitochondrial termination factor mTTF which promotes replication pausing. Their function in replication pausing prevents unregulated replication that may occur for example by collisions between the machineries of DNA replication and transcription during mtDNA synthesis. This ensures the incorporation of RNA transcripts into replication intermediates at the replication fork and allows for proper fork progression. Possibly functions downstream of Dref which activates genes involved in mtDNA replication and maintenance. The protein is Transcription termination factor 5, mitochondrial of Drosophila melanogaster (Fruit fly).